A 288-amino-acid polypeptide reads, in one-letter code: 30 kDa spicule matrix protein (288 aa).

An N-terminal signal peptide occupies residues 1-20 (MRCFVYVLVCVVASVSYSRA). The region spanning 93 to 163 (ANMYCGQMHP…YTNWEGMVAP (71 aa)) is the C-type lectin domain. Asn103 is a glycosylation site (N-linked (GlcNAc...) asparagine).

As to expression, spines and tube feet.

Its function is as follows. Matrix protein of the sea urchin embryo spicule. The function of the matrix proteins is to direct crystal growth in certain orientations and inhibit growth in others. This is 30 kDa spicule matrix protein (SM30) from Hemicentrotus pulcherrimus (Sea urchin).